A 421-amino-acid chain; its full sequence is Testin (421 aa).

In terms of domain architecture, PET spans 92–199; it reads MILTNPVAAK…GDVKLPREMN (108 aa). The tract at residues 133–164 is disordered; it reads EKQPVAGSEGAQYRKKQLAKQLPAHDQDPSKC. Over residues 155–164 the composition is skewed to basic and acidic residues; the sequence is PAHDQDPSKC. LIM zinc-binding domains lie at 234–297, 299–359, and 362–421; these read YSCY…CDSE, PRCA…NHAV, and QGCH…KMMS.

The protein belongs to the prickle / espinas / testin family. Interacts via LIM domain 1 with ZYX. Interacts (via LIM domain 3) with ENAH and VASP. Interacts with ALKBH4, talin, actin, alpha-actinin, GRIP1 and PXN. Interacts (via LIM domain 2) with ACTL7A (via N-terminus). Heterodimer with ACTL7A; the heterodimer interacts with ENAH to form a heterotrimer.

The protein resides in the cytoplasm. It localises to the cell junction. It is found in the focal adhesion. Its function is as follows. Scaffold protein that may play a role in cell adhesion, cell spreading and in the reorganization of the actin cytoskeleton. Plays a role in the regulation of cell proliferation. May act as a tumor suppressor. This chain is Testin (TES), found in Sus scrofa (Pig).